Here is a 761-residue protein sequence, read N- to C-terminus: Elongation factor G, mitochondrial (761 aa).

The N-terminal 42 residues, 1 to 42, are a transit peptide targeting the mitochondrion; it reads MSVQKMMWVPRKMVGGRIPFFTCSKVFSGFSRRSFHESPLAR. Residues 68-349 form the tr-type G domain; it reads NKLRNIGISA…AIVDYLPNPS (282 aa). Residues 77–84, 148–152, and 202–205 each bind GTP; these read AHIDSGKT, DTPGH, and NKMD.

It belongs to the TRAFAC class translation factor GTPase superfamily. Classic translation factor GTPase family. EF-G/EF-2 subfamily. The precursor is processed in two steps involving mitochondrial intermediate peptidase (MIP) and mitochondrial processing peptidase (MPP).

Its subcellular location is the mitochondrion. It functions in the pathway protein biosynthesis; polypeptide chain elongation. Mitochondrial GTPase that catalyzes the GTP-dependent ribosomal translocation step during translation elongation. During this step, the ribosome changes from the pre-translocational (PRE) to the post-translocational (POST) state as the newly formed A-site-bound peptidyl-tRNA and P-site-bound deacylated tRNA move to the P and E sites, respectively. Catalyzes the coordinated movement of the two tRNA molecules, the mRNA and conformational changes in the ribosome. The sequence is that of Elongation factor G, mitochondrial from Saccharomyces cerevisiae (strain ATCC 204508 / S288c) (Baker's yeast).